A 348-amino-acid polypeptide reads, in one-letter code: Histidinol-phosphate aminotransferase (348 aa).

Lysine 210 is modified (N6-(pyridoxal phosphate)lysine).

This sequence belongs to the class-II pyridoxal-phosphate-dependent aminotransferase family. Histidinol-phosphate aminotransferase subfamily. In terms of assembly, homodimer. Pyridoxal 5'-phosphate serves as cofactor.

The catalysed reaction is L-histidinol phosphate + 2-oxoglutarate = 3-(imidazol-4-yl)-2-oxopropyl phosphate + L-glutamate. Its pathway is amino-acid biosynthesis; L-histidine biosynthesis; L-histidine from 5-phospho-alpha-D-ribose 1-diphosphate: step 7/9. In Cytophaga hutchinsonii (strain ATCC 33406 / DSM 1761 / CIP 103989 / NBRC 15051 / NCIMB 9469 / D465), this protein is Histidinol-phosphate aminotransferase.